The following is a 572-amino-acid chain: Oxygen-dependent choline dehydrogenase (572 aa).

9-38 (DYVIIGGGSAGSVLGARLSEDKDKNVLVLE) provides a ligand contact to FAD. Catalysis depends on histidine 477, which acts as the Proton acceptor.

Belongs to the GMC oxidoreductase family. Requires FAD as cofactor.

It catalyses the reaction choline + A = betaine aldehyde + AH2. The enzyme catalyses betaine aldehyde + NAD(+) + H2O = glycine betaine + NADH + 2 H(+). The protein operates within amine and polyamine biosynthesis; betaine biosynthesis via choline pathway; betaine aldehyde from choline (cytochrome c reductase route): step 1/1. In terms of biological role, involved in the biosynthesis of the osmoprotectant glycine betaine. Catalyzes the oxidation of choline to betaine aldehyde and betaine aldehyde to glycine betaine at the same rate. The polypeptide is Oxygen-dependent choline dehydrogenase (Staphylococcus epidermidis (strain ATCC 12228 / FDA PCI 1200)).